An 810-amino-acid chain; its full sequence is MAQHLLHGTLHATIYEVDALHGGGVRQGFLGKILANVEETIGVGKGETQLYATIDLQKARVGRTRKIKNEPKNPKWYESFHIYCAHLASDIIFTVKDDNPIGATLIGRAYIPVDQVINGEEVDQWVEILDNDRNPIQGGSKIHVKLQYFHVEEDRNWNMGIKSAKFPGVPYTFFSQRQGCKVSLYQDAHIPDNFVPRIPLAGGKNYEPQRCWEDIFDAISNAKHLIYITGWSVYAEIALVRDSRRPKPGGDVTIGELLKKKASEGVRVLLLVWDDRTSVDVLKKDGLMATHDEETENFFRGSDVHCILCPRNPDDGGSIVQSLQISTMFTHHQKIVVVDSEMPSRGGSEMRRIVSFVGGIDLCDGRYDTPFHSLFRTLDTVHHDDFHQPNFTGAAITKGGPREPWHDIHSRLEGPIAWDVMYNFEQRWSKQGGKDILVKLRDLSDIIITPSPVMFQEDHDVWNVQLFRSIDGGAAAGFPESPEAAAEAGLVSGKDNIIDRSIQDAYIHAIRRAKDFIYVENQYFLGSSFAWAADGITPEDINALHLIPKELSLKIVSKIEKGEKFRVYVVVPMWPEGLPESGSVQAILDWQRRTMEMMYKDVIQALRAQGLEEDPRNYLTFFCLGNREVKKDGEYEPAEKPDPDTDYMRAQEARRFMIYVHTKMMIVDDEYIIIGSANINQRSMDGARDSEIAMGGYQPHHLSHRQPARGQIHGFRMSLWYEHLGMLDETFLDPSSLECIEKVNRISDKYWDFYSSESLEHDLPGHLLRYPIGVASEGDITELPGFEFFPDTKARILGTKSDYLPPILTT.

The C2 domain occupies 1-126 (MAQHLLHGTL…INGEEVDQWV (126 aa)). A Ca(2+)-binding site is contributed by Asp187. The PLD phosphodiesterase 1 domain maps to 327–366 (TMFTHHQKIVVVDSEMPSRGGSEMRRIVSFVGGIDLCDGR). Residues His332, Lys334, and Asp339 contribute to the active site. His332 contributes to the a 1,2-diacyl-sn-glycero-3-phosphate binding site. Ca(2+) is bound by residues His372 and His406. A 1,2-diacyl-sn-glycero-3-phosphate contacts are provided by Gln522 and His661. The region spanning 656–683 (FMIYVHTKMMIVDDEYIIIGSANINQRS) is the PLD phosphodiesterase 2 domain. Residues His661, Lys663, and Asp668 contribute to the active site. Glu722 contacts Ca(2+).

It belongs to the phospholipase D family. C2-PLD subfamily. Interacts with GPA1. This binding inhibits PLDALPHA1 activity and is relieved by GTP. The cofactor is Ca(2+). In terms of tissue distribution, highly expressed in roots, stems and flowers, moderately in leaves, seedlings and siliques. Not detected in seeds.

The protein resides in the cytoplasm. The protein localises to the cell membrane. It localises to the mitochondrion membrane. It is found in the microsome membrane. Its subcellular location is the vacuole. The protein resides in the cytoplasmic vesicle. The protein localises to the clathrin-coated vesicle. It carries out the reaction a 1,2-diacyl-sn-glycero-3-phosphocholine + H2O = a 1,2-diacyl-sn-glycero-3-phosphate + choline + H(+). Not inhibited by neomycin. In terms of biological role, hydrolyzes glycerol-phospholipids at the terminal phosphodiesteric bond to generate phosphatidic acids (PA). Plays an important role in various cellular processes, including phytohormone action and response to stress, characterized by acidification of the cell. Involved in wound induction of jasmonic acid. May be involved in membrane lipid remodeling. Probably involved in freezing tolerance by modulating the cold-responsive genes and accumulation of osmolytes. Can use phosphatidylcholine (PC), phosphatidylethanolamine (PE) and phosphatidylglycerol (PG) as substrates, both in presence or in absence of PIP2. Its main substrate is phosphatidylcholine. Stimulates the intrinsic GTPase activity of GPA1 upon binding. Mediates the abscisic acid effects on stomata through interaction with GPA1 and the production of phosphatidic acid that bind to ABI1. Involved in seed aging and deterioration. Involved in microtubule stabilization and salt tolerance. Involved in abscisic acid-induced stomatal closure. This chain is Phospholipase D alpha 1, found in Arabidopsis thaliana (Mouse-ear cress).